Consider the following 274-residue polypeptide: 3',5'-cyclic adenosine monophosphate phosphodiesterase CpdA (274 aa).

Residues aspartate 21, histidine 23, aspartate 63, asparagine 93, histidine 163, histidine 202, and histidine 204 each contribute to the Fe cation site. Residues histidine 23, aspartate 63, and 93–94 (NH) each bind AMP. Histidine 204 contacts AMP.

Belongs to the cyclic nucleotide phosphodiesterase class-III family. Fe(2+) is required as a cofactor.

It catalyses the reaction 3',5'-cyclic AMP + H2O = AMP + H(+). In terms of biological role, hydrolyzes cAMP to 5'-AMP. Plays an important regulatory role in modulating the intracellular concentration of cAMP, thereby influencing cAMP-dependent processes. This chain is 3',5'-cyclic adenosine monophosphate phosphodiesterase CpdA, found in Vibrio vulnificus (strain CMCP6).